A 468-amino-acid chain; its full sequence is Hexokinase (468 aa).

The 457-residue stretch at 10 to 466 (AKQLAELEVV…SGKGAALIAD (457 aa)) folds into the Hexokinase domain. The hexokinase small subdomain stretch occupies residues 74-225 (TGAEVGEAYA…NVPAVCKAIV (152 aa)). Position 85 to 90 (85 to 90 (DFGGST)) interacts with ATP. The glucose-binding stretch occupies residues 163-189 (PVGFTFSFPCAQAALNSSFLIEWTKGF). Residues 226–455 (NDTVGTLVSC…KNIHYCIADD (230 aa)) form a hexokinase large subdomain region.

The protein belongs to the hexokinase family.

The catalysed reaction is a D-hexose + ATP = a D-hexose 6-phosphate + ADP + H(+). It catalyses the reaction D-mannose + ATP = D-mannose 6-phosphate + ADP + H(+). It carries out the reaction D-fructose + ATP = D-fructose 6-phosphate + ADP + H(+). The enzyme catalyses D-glucose + ATP = D-glucose 6-phosphate + ADP + H(+). It functions in the pathway carbohydrate metabolism; hexose metabolism. The protein operates within carbohydrate degradation; glycolysis; D-glyceraldehyde 3-phosphate and glycerone phosphate from D-glucose: step 1/4. Functionally, catalyzes the phosphorylation of various hexoses to hexose 6-phosphate. This Toxoplasma gondii protein is Hexokinase (HXK).